A 302-amino-acid chain; its full sequence is Aquaporin NIP3-1 (302 aa).

Residues 1-31 (MEPGSTPPNGSAPATPGTPAPLFSSGGPRVD) form a disordered region. Over residues 7–21 (PPNGSAPATPGTPAP) the composition is skewed to low complexity. 2 helical membrane-spanning segments follow: residues 76–96 (LGAE…APIV) and 102–122 (GAIS…TVIL). Positions 133-135 (NPS) match the NPA 1 motif. 3 consecutive transmembrane segments (helical) span residues 149–169 (LQVP…AFAL), 193–213 (AFFT…AVAT), and 217–237 (AVGE…ILVA). The short motif at 246–248 (NPV) is the NPA 2 element. Residues 264–284 (WIYLLAPTLGALAGASVYKAV) traverse the membrane as a helical segment.

This sequence belongs to the MIP/aquaporin (TC 1.A.8) family. NIP (TC 1.A.8.12) subfamily.

It is found in the membrane. In terms of biological role, aquaporins facilitate the transport of water and small neutral solutes across cell membranes. In Zea mays (Maize), this protein is Aquaporin NIP3-1 (NIP3-1).